We begin with the raw amino-acid sequence, 341 residues long: MSDLKPKQVFEETIFSQQDKPELTAQQQFDQQQTFIPTTIEETEPELEDALEQVIRPSGRRKWLAGGLFAAFAGLVGWQAVDSVLSAMQNGDWLTLGWSGFISVLAGLGLGAMGKELWKLRQLRHLFSVQEQGEKLLQSDSVGQGKAFCQQVAKQSGVAEENPAYDRWKNSVNTAHSDAEILQMYDAMVVTQQDKQATKVISRFATESAALVAISPLAIADMLLVAWRNFKMIDTLSTIYGIELGYASRIRLLRLVLANMAVAGASELVIDAGMDLMSMDLAGKLSARAGQGVGVGILTARLGLKAMALLRPIPWQAETQVKLSAIRKEIVSKVASITLKP.

4 helical membrane-spanning segments follow: residues Leu64–Val84, Trp93–Met113, Glu207–Trp227, and Leu255–Asp275.

This sequence belongs to the UPF0283 family.

It localises to the cell inner membrane. The sequence is that of UPF0283 membrane protein VV2076 from Vibrio vulnificus (strain YJ016).